A 261-amino-acid polypeptide reads, in one-letter code: Trifolitoxin immunity protein (261 aa).

Functionally, required for TFX resistance. The sequence is that of Trifolitoxin immunity protein (tfxG) from Rhizobium leguminosarum bv. trifolii.